Reading from the N-terminus, the 146-residue chain is SPFSAHEEKLIVDLWAKVDVASCGGDALSRMLIIYPWKRRYFEHFGKLSTDQDVLHNEKIREHGKKVLASFGEAVKHLDNIKGHFAHLSKLHFEKFHVDCENFKLLGDIIIVVLGMHHPKDFTLQTHAAFQKLVRHVAAALSAEYH.

The Globin domain maps to Pro-2–His-146. 2 residues coordinate heme b: His-63 and His-92.

This sequence belongs to the globin family. In terms of assembly, heterotetramer of two alpha chains and two beta chains. As to expression, red blood cells.

Functionally, involved in oxygen transport from the lung to the various peripheral tissues. In Caiman crocodilus (Spectacled caiman), this protein is Hemoglobin subunit beta (HBB).